A 37-amino-acid chain; its full sequence is Esculentin-2B (37 aa).

Cys31 and Cys37 form a disulfide bridge.

Expressed by the skin glands.

The protein resides in the secreted. Antibacterial activity against Gram-positive bacterium S.aureus and Gram-negative bacterium E.coli. Has activity against C.albicans. This is Esculentin-2B from Lithobates berlandieri (Rio Grande leopard frog).